Consider the following 834-residue polypeptide: Serine-rich coiled-coil domain-containing protein 2 (834 aa).

Positions 169–212 are disordered; the sequence is PKSQLNGFYGNRSAGSMQRPRANSCATRSSSGESLAQSPDSSKS. Positions 192–212 are enriched in polar residues; sequence SCATRSSSGESLAQSPDSSKS. At serine 223 the chain carries Phosphoserine. The segment covering 426–443 has biased composition (basic and acidic residues); it reads RTRITPEEMSLKEEKHEN. Disordered regions lie at residues 426 to 454, 477 to 509, 573 to 628, 695 to 714, and 780 to 834; these read RTRITPEEMSLKEEKHENGPPQDMFDSPK, CTKHTSGNNLVSPDTDYRAGSSFELSPSDSSDG, NMNR…SPYR, LHDIQLSLPSSPEPEDGDKV, and APSF…RGPQ. A Phosphoserine modification is found at serine 452. Residues 497-507 are compositionally biased toward low complexity; the sequence is SSFELSPSDSS. Basic and acidic residues-rich tracts occupy residues 573–584 and 601–611; these read NMNRFDRPDRNV and GQEHYHLSHPD. The stretch at 712 to 749 forms a coiled coil; sequence DKVYKNEDLLNEIKQLKDEIKKKDEKIQLLELQLATQH. Composition is skewed to polar residues over residues 781–790 and 804–816; these read PSFSPWQGSF and TSSTTAFQQPSQT.

Belongs to the CCSER family.

It is found in the cytoplasm. The protein resides in the cytoskeleton. Its function is as follows. Microtubule-binding protein which might play a role in microtubule bundling. In Homo sapiens (Human), this protein is Serine-rich coiled-coil domain-containing protein 2 (CCSER2).